The sequence spans 156 residues: Low-salt glycan biosynthesis protein Agl8 (156 aa).

Substrate-binding positions include Arg-14–Ile-15 and Arg-47. Positions Ala-25 to Asp-156 constitute a Nudix hydrolase domain. Residues Gly-60, Glu-80, and Gln-130 each coordinate Mg(2+). A Nudix box motif is present at residues Gly-61–Gly-82.

It belongs to the Nudix hydrolase family. Mg(2+) serves as cofactor.

It participates in protein modification; protein glycosylation. Its pathway is cell surface structure biogenesis; S-layer biogenesis. Functionally, nudix hydrolase involved in N-glycan biosynthetic pathway that takes place under low-salt conditions (1.75 M instead of 3.4 M). Participates in the formation of the tetrasaccharide present at 'Asn-532' of S-layer glycoprotein Csg, consisting of a sulfated hexose, 2 hexoses and rhamnose. Mediates attachment of sugar 3 in the tetrasaccharide. The sequence is that of Low-salt glycan biosynthesis protein Agl8 (agl8) from Haloferax volcanii (strain ATCC 29605 / DSM 3757 / JCM 8879 / NBRC 14742 / NCIMB 2012 / VKM B-1768 / DS2) (Halobacterium volcanii).